The primary structure comprises 1298 residues: DNA-directed RNA polymerase subunit beta' (1298 aa).

Positions 60, 62, 75, and 78 each coordinate Zn(2+). Residues aspartate 535, aspartate 537, and aspartate 539 each coordinate Mg(2+). Zn(2+)-binding residues include cysteine 877, cysteine 954, cysteine 961, and cysteine 964.

The protein belongs to the RNA polymerase beta' chain family. As to quaternary structure, the RNAP catalytic core consists of 2 alpha, 1 beta, 1 beta' and 1 omega subunit. When a sigma factor is associated with the core the holoenzyme is formed, which can initiate transcription. Mg(2+) serves as cofactor. Requires Zn(2+) as cofactor.

The catalysed reaction is RNA(n) + a ribonucleoside 5'-triphosphate = RNA(n+1) + diphosphate. DNA-dependent RNA polymerase catalyzes the transcription of DNA into RNA using the four ribonucleoside triphosphates as substrates. This Micrococcus luteus (strain ATCC 4698 / DSM 20030 / JCM 1464 / CCM 169 / CCUG 5858 / IAM 1056 / NBRC 3333 / NCIMB 9278 / NCTC 2665 / VKM Ac-2230) (Micrococcus lysodeikticus) protein is DNA-directed RNA polymerase subunit beta'.